A 347-amino-acid chain; its full sequence is Protein YIPF1 homolog (347 aa).

A disordered region spans residues 1-115; the sequence is MSNYNNKHHD…FSDNVPLNTN (115 aa). Over 1–166 the chain is Cytoplasmic; it reads MSNYNNKHHD…FFNLIRENPD (166 aa). Polar residues predominate over residues 34-47; that stretch reads NLFPNTNIDYNDYT. Composition is skewed to low complexity over residues 48-67 and 76-104; these read QNRG…LQFQ and NSNT…SSNN. The segment covering 105-115 has biased composition (polar residues); sequence KFSDNVPLNTN. Residues 167 to 187 traverse the membrane as a helical segment; the sequence is LYGPFWVLTSLVFIVAVTSNL. At 188-207 the chain is on the lumenal side; sequence NEYFHSSDHKSWEVDIQKIV. Residues 208–228 traverse the membrane as a helical segment; it reads YSAITIYGYSFVIPLILWGIF. Residues 229–232 lie on the Cytoplasmic side of the membrane; the sequence is KWMN. Residues 233–253 form a helical membrane-spanning segment; it reads LGLRLLDMLCIYGYTLFIFVP. Topologically, residues 254–255 are lumenal; the sequence is AS. The helical transmembrane segment at 256 to 276 threads the bilayer; it reads ILCVIPLQLVQWIIVAIASIV. Residues 277–296 lie on the Cytoplasmic side of the membrane; that stretch reads SGLFLVTNIFTPLKEDFTKR. A helical membrane pass occupies residues 297–317; it reads GLIICAVIGALHIGLALVLKL. Residues 318–347 lie on the Lumenal side of the membrane; the sequence is YFFANSTENFTISDSSSTPTPTPTNTTKLL. N-linked (GlcNAc...) asparagine glycosylation is found at asparagine 322, asparagine 326, and asparagine 342.

Belongs to the YIP1 family.

It localises to the golgi apparatus. The protein localises to the cis-Golgi network membrane. Its subcellular location is the trans-Golgi network membrane. It is found in the late endosome membrane. This is Protein YIPF1 homolog (yipf1) from Dictyostelium discoideum (Social amoeba).